Here is a 330-residue protein sequence, read N- to C-terminus: MVSLQAVQQANVGIGSLPAGLVALFMGATSGIGQSALHHFAQHASSPRIYSIARPSAVRSHETFLDSLRSSNPSGTYNLIEADVSLISEIDRIVADIKENEPKIDILFMSAGFMAFEGRKDTREGLDPSMSTRYYSRLRLVQQLVPLLNNAPSPRVVSVLGGGLESPLNEQDLDLRDPKNWTFWSSSMHSGTMGTLTLERIARANPNLSIVHWFPGTVATPGLVRANQFGMSPPNPTSADEAGQRWAFIATNDRYAVRGGLVPVPIGLSPVQKSGGGIFLVDPAGEGSNNERVLAGLRKRGVDDAVWRFTEGIFASAAKAGRSSQAKDEL.

NADP(+)-binding positions include 12–17 (VGIGSL), 38–42 (HHFAQ), 59–60 (RS), 80–82 (IEA), and 160–163 (LGGG). The helical transmembrane segment at 12 to 32 (VGIGSLPAGLVALFMGATSGI) threads the bilayer. The segment at 158–202 (SVLGGGLESPLNEQDLDLRDPKNWTFWSSSMHSGTMGTLTLERIA) is interaction with ASS1. N-linked (GlcNAc...) asparagine glycans are attached at residues Asn180 and Asn207.

Belongs to the NmrA-type oxidoreductase family.

Its subcellular location is the membrane. Functionally, nmrA-like family domain-containing oxidoreductase; part of the gene cluster that mediates the biosynthesis of notoamide, a fungal indole alkaloid that belongs to a family of natural products containing a characteristic bicyclo[2.2.2]diazaoctane core. The first step of notoamide biosynthesis involves coupling of L-proline and L-tryptophan by the bimodular NRPS notE, to produce cyclo-L-tryptophan-L-proline called brevianamide F. The reverse prenyltransferase notF then acts as a deoxybrevianamide E synthase and converts brevianamide F to deoxybrevianamide E via reverse prenylation at C-2 of the indole ring leading to the bicyclo[2.2.2]diazaoctane core. Deoxybrevianamide E is further hydroxylated at C-6 of the indole ring, likely catalyzed by the cytochrome P450 monooxygenase notG, to yield 6-hydroxy-deoxybrevianamide E. 6-hydroxy-deoxybrevianamide E is a specific substrate of the prenyltransferase notC for normal prenylation at C-7 to produce 6-hydroxy-7-prenyl-deoxybrevianamide, also called notoamide S. As the proposed pivotal branching point in notoamide biosynthesis, notoamide S can be diverted to notoamide E through an oxidative pyran ring closure putatively catalyzed by either notH cytochrome P450 monooxygenase or the notD FAD-linked oxidoreductase. This step would be followed by an indole 2,3-epoxidation-initiated pinacol-like rearrangement catalyzed by the notB FAD-dependent monooxygenase leading to the formation of notoamide C and notoamide D. On the other hand notoamide S is converted to notoamide T by notH (or notD), a bifunctional oxidase that also functions as the intramolecular Diels-Alderase responsible for generation of (+)-notoamide T. To generate antipodal (-)-notoaminide T, notH' (or notD') in Aspergillus versicolor is expected to catalyze a Diels-Alder reaction leading to the opposite stereochemistry. The remaining oxidoreductase notD (or notH) likely catalyzes the oxidative pyran ring formation to yield (+)-stephacidin A. The FAD-dependent monooxygenase notI is highly similar to notB and is predicted to catalyze a similar conversion from (+)-stephacidin A to (-)-notoamide B via the 2,3-epoxidation of (+)-stephacidin A followed by a pinacol-type rearrangement. Finally, it remains unclear which enzyme could be responsible for the final hydroxylation steps leading to notoamide A and sclerotiamide. The function of notO in the notoamide biosynthesis has not been determined yet. In Aspergillus sp. (strain MF297-2), this protein is NmrA-like family domain-containing oxidoreductase notO.